The sequence spans 239 residues: ATP synthase subunit a (239 aa).

6 consecutive transmembrane segments (helical) span residues 31–51 (FLLQPHVTYTWVVMLVLLGLG), 91–111 (VFPLIASLGMFILFSNYLGMI), 125–145 (AACALISVVFTHVIGIKFHGV), 151–171 (FMGPVWWLTPLIMPIEIIGHI), 194–214 (ILFFLAGFYLAPLPMMFLGLF), and 215–235 (TGFIQAFIFCLLSMMYFAGAI).

It belongs to the ATPase A chain family. In terms of assembly, F-type ATPases have 2 components, CF(1) - the catalytic core - and CF(0) - the membrane proton channel. CF(1) has five subunits: alpha(3), beta(3), gamma(1), delta(1), epsilon(1). CF(0) has three main subunits: a(1), b(2) and c(9-12). The alpha and beta chains form an alternating ring which encloses part of the gamma chain. CF(1) is attached to CF(0) by a central stalk formed by the gamma and epsilon chains, while a peripheral stalk is formed by the delta and b chains.

It is found in the cell inner membrane. Functionally, key component of the proton channel; it plays a direct role in the translocation of protons across the membrane. The sequence is that of ATP synthase subunit a from Syntrophobacter fumaroxidans (strain DSM 10017 / MPOB).